Consider the following 500-residue polypeptide: Betaine aldehyde dehydrogenase, chloroplastic (500 aa).

Residues 1–7 (MSMPIPS) constitute a chloroplast transit peptide. An NAD(+)-binding site is contributed by 238 to 243 (GSSATG). Glutamate 260 functions as the Proton acceptor in the catalytic mechanism. Cysteine 294 functions as the Nucleophile in the catalytic mechanism.

Belongs to the aldehyde dehydrogenase family. As to quaternary structure, homodimer.

It is found in the plastid. The protein localises to the chloroplast. The catalysed reaction is betaine aldehyde + NAD(+) + H2O = glycine betaine + NADH + 2 H(+). Its pathway is amine and polyamine biosynthesis; betaine biosynthesis via choline pathway; betaine from betaine aldehyde: step 1/1. The protein is Betaine aldehyde dehydrogenase, chloroplastic of Beta vulgaris (Sugar beet).